Reading from the N-terminus, the 179-residue chain is Peptidyl-tRNA hydrolase (179 aa).

Y15 is a tRNA binding site. H20 acts as the Proton acceptor in catalysis. TRNA is bound by residues Y66, N68, and N114.

It belongs to the PTH family. In terms of assembly, monomer.

It localises to the cytoplasm. It catalyses the reaction an N-acyl-L-alpha-aminoacyl-tRNA + H2O = an N-acyl-L-amino acid + a tRNA + H(+). Functionally, hydrolyzes ribosome-free peptidyl-tRNAs (with 1 or more amino acids incorporated), which drop off the ribosome during protein synthesis, or as a result of ribosome stalling. Its function is as follows. Catalyzes the release of premature peptidyl moieties from peptidyl-tRNA molecules trapped in stalled 50S ribosomal subunits, and thus maintains levels of free tRNAs and 50S ribosomes. This chain is Peptidyl-tRNA hydrolase, found in Chlamydia muridarum (strain MoPn / Nigg).